Reading from the N-terminus, the 308-residue chain is MQANIFPFYPQPRTSFKFDTKIIEIIIICIVTACTFIIILPGIRGKSRSIWLFRILTSLFIGAVILAVNFTSDWETGIVTATTVYKSFSHSMLNASIGLWIGLKGVNITLIGNPVYQLNETINYNEEFAWESANQFDKNYKDGLERGLPYPILYVAEKFTINSPCGLFQQYCISTYYSSEIMWVAFGSWILYNVLFSMPVILYGICMMFVTAICMLVSLISFASVRQAPVCNIHFGNAVLKTHFGVSYWLSLVTGLFCLIVSLVLLFLYKTQPKVIRLIFSYGEEEDLSDKSENEEEHSSALSLNEML.

At 1-21 (MQANIFPFYPQPRTSFKFDTK) the chain is on the extracellular side. The helical transmembrane segment at 22-42 (IIEIIIICIVTACTFIIILPG) threads the bilayer. The Cytoplasmic segment spans residues 43–49 (IRGKSRS). The helical transmembrane segment at 50–70 (IWLFRILTSLFIGAVILAVNF) threads the bilayer. The Extracellular portion of the chain corresponds to 71–172 (TSDWETGIVT…SPCGLFQQYC (102 aa)). 3 N-linked (GlcNAc...) asparagine glycosylation sites follow: Asn-94, Asn-107, and Asn-119. The chain crosses the membrane as a helical span at residues 173-195 (ISTYYSSEIMWVAFGSWILYNVL). At 196–199 (FSMP) the chain is on the cytoplasmic side. A helical membrane pass occupies residues 200 to 220 (VILYGICMMFVTAICMLVSLI). At 221–247 (SFASVRQAPVCNIHFGNAVLKTHFGVS) the chain is on the extracellular side. Residues 248–268 (YWLSLVTGLFCLIVSLVLLFL) form a helical membrane-spanning segment. Topologically, residues 269–308 (YKTQPKVIRLIFSYGEEEDLSDKSENEEEHSSALSLNEML) are cytoplasmic.

The protein belongs to the DUOXA family.

It is found in the membrane. Possible role in maturation and transport from the endoplasmic reticulum to the plasma membrane of functional dual oxidase. This chain is Dual oxidase maturation factor 1 (duoxa1), found in Xenopus tropicalis (Western clawed frog).